A 193-amino-acid chain; its full sequence is Xanthine phosphoribosyltransferase (193 aa).

Residues leucine 20 and asparagine 27 each contribute to the xanthine site. 129–133 (ANGKA) is a 5-phospho-alpha-D-ribose 1-diphosphate binding site. Lysine 157 is a xanthine binding site.

This sequence belongs to the purine/pyrimidine phosphoribosyltransferase family. Xpt subfamily. As to quaternary structure, homodimer.

The protein resides in the cytoplasm. It catalyses the reaction XMP + diphosphate = xanthine + 5-phospho-alpha-D-ribose 1-diphosphate. The protein operates within purine metabolism; XMP biosynthesis via salvage pathway; XMP from xanthine: step 1/1. Its function is as follows. Converts the preformed base xanthine, a product of nucleic acid breakdown, to xanthosine 5'-monophosphate (XMP), so it can be reused for RNA or DNA synthesis. The protein is Xanthine phosphoribosyltransferase of Bifidobacterium longum (strain NCC 2705).